The primary structure comprises 205 residues: Thymidylate kinase (205 aa).

Position 10–17 (10–17 (GLEGAGKS)) interacts with ATP.

The protein belongs to the thymidylate kinase family.

The enzyme catalyses dTMP + ATP = dTDP + ADP. Functionally, phosphorylation of dTMP to form dTDP in both de novo and salvage pathways of dTTP synthesis. The sequence is that of Thymidylate kinase from Idiomarina loihiensis (strain ATCC BAA-735 / DSM 15497 / L2-TR).